We begin with the raw amino-acid sequence, 534 residues long: Protein BFR2 (534 aa).

Residues 27–148 (ENASLFQHNE…ETEEAQQKRH (122 aa)) form a disordered region. Phosphoserine is present on residues S41 and S44. Positions 52 to 77 (EETKKAHYLEVEKSKLRAEKGLELND) are enriched in basic and acidic residues. The stretch at 86–161 (SRQALYEEVS…KLIQQETKQA (76 aa)) forms a coiled coil. Acidic residues-rich tracts occupy residues 93 to 114 (EVSENEDEEEEEEEEEEKEEDA) and 121 to 142 (SEDEEVEIDEEESDADGGETEE). Phosphoserine is present on residues S366, S372, and S379.

Belongs to the AATF family.

The protein resides in the nucleus. Its subcellular location is the nucleolus. Functionally, involved in endoplasmic reticulum to Golgi transport. Involved in a protein-transport step blocked by brefeldin A, which disrupts the Golgi apparatus and its incoming protein flux. May also be involved for mass growth or cell proliferation. This chain is Protein BFR2 (BFR2), found in Saccharomyces cerevisiae (strain ATCC 204508 / S288c) (Baker's yeast).